Consider the following 550-residue polypeptide: ATP-dependent RNA helicase MSS116, mitochondrial (550 aa).

Residues methionine 1 to asparagine 11 show a composition bias toward basic residues. The N-terminal 41 residues, methionine 1 to proline 41, are a transit peptide targeting the mitochondrion. The tract at residues methionine 1–glutamate 51 is disordered. The Q motif signature appears at phenylalanine 71–glutamine 99. One can recognise a Helicase ATP-binding domain in the interval threonine 103–histidine 285. Alanine 116 to threonine 123 is an ATP binding site. The DEAD box motif lies at aspartate 230–aspartate 233. One can recognise a Helicase C-terminal domain in the interval alanine 316–threonine 472.

This sequence belongs to the DEAD box helicase family. DDX18/HAS1 subfamily.

The protein resides in the mitochondrion matrix. The enzyme catalyses ATP + H2O = ADP + phosphate + H(+). ATP-dependent RNA helicase required for mitochondrial splicing of group I and II introns. Also required for efficient mitochondrial translation. The chain is ATP-dependent RNA helicase MSS116, mitochondrial (MSS116) from Phaeosphaeria nodorum (strain SN15 / ATCC MYA-4574 / FGSC 10173) (Glume blotch fungus).